The sequence spans 166 residues: Urease accessory protein UreE 2 (166 aa).

The interval 133–156 is disordered; it reads QPEHGAYGGGHHHSRAGEEDFNYP.

It belongs to the UreE family.

The protein resides in the cytoplasm. Its function is as follows. Involved in urease metallocenter assembly. Binds nickel. Probably functions as a nickel donor during metallocenter assembly. The protein is Urease accessory protein UreE 2 of Pseudomonas syringae pv. tomato (strain ATCC BAA-871 / DC3000).